Here is a 173-residue protein sequence, read N- to C-terminus: Ribulose bisphosphate carboxylase small subunit, chloroplastic 3 (173 aa).

The N-terminal 49 residues, 1 to 49 (MASIPATVATVAQANMVAPFTGLKSNAAFPVTKKVNDFSTLPSNGGRVQ), are a transit peptide targeting the chloroplast.

This sequence belongs to the RuBisCO small chain family. Heterohexadecamer of 8 large and 8 small subunits.

It is found in the plastid. The protein resides in the chloroplast. RuBisCO catalyzes two reactions: the carboxylation of D-ribulose 1,5-bisphosphate, the primary event in carbon dioxide fixation, as well as the oxidative fragmentation of the pentose substrate. Both reactions occur simultaneously and in competition at the same active site. Although the small subunit is not catalytic it is essential for maximal activity. The protein is Ribulose bisphosphate carboxylase small subunit, chloroplastic 3 of Flaveria pringlei.